The sequence spans 104 residues: Large ribosomal subunit protein uL23 (104 aa).

Belongs to the universal ribosomal protein uL23 family. Part of the 50S ribosomal subunit. Contacts protein L29, and trigger factor when it is bound to the ribosome.

In terms of biological role, one of the early assembly proteins it binds 23S rRNA. One of the proteins that surrounds the polypeptide exit tunnel on the outside of the ribosome. Forms the main docking site for trigger factor binding to the ribosome. This is Large ribosomal subunit protein uL23 from Polynucleobacter asymbioticus (strain DSM 18221 / CIP 109841 / QLW-P1DMWA-1) (Polynucleobacter necessarius subsp. asymbioticus).